Reading from the N-terminus, the 191-residue chain is MPDAFPPCSILILAGGRGQRMGGRDKGLIDWQGEPLVAHVQRVVRPLSDDLVISCNRNQEAYRAYADQVVGDAEADFPGPLAGVIAGLKVARHEWVVLLACDAPRVDQVLIEDLLRLAKANDSAAMVRQGEYWQPMFSVLPKRVLPVLEQAWAAGERSLQKALLREAVQGLACADDDCRLSNFNSPELLQG.

Residues 13–15 (LAG), K26, D72, and D102 contribute to the GTP site. D102 is a binding site for Mg(2+).

The protein belongs to the MobA family. Monomer. Mg(2+) serves as cofactor.

The protein localises to the cytoplasm. The enzyme catalyses Mo-molybdopterin + GTP + H(+) = Mo-molybdopterin guanine dinucleotide + diphosphate. Transfers a GMP moiety from GTP to Mo-molybdopterin (Mo-MPT) cofactor (Moco or molybdenum cofactor) to form Mo-molybdopterin guanine dinucleotide (Mo-MGD) cofactor. This Pseudomonas putida (strain GB-1) protein is Molybdenum cofactor guanylyltransferase.